A 281-amino-acid chain; its full sequence is tRNA N(3)-cytidine methyltransferase METTL8, mitochondrial (281 aa).

The transit peptide at 1–22 directs the protein to the mitochondrion; the sequence is MNVIWRSCICRLRQGKVPHRCQ. Lysine 80 is covalently cross-linked (Glycyl lysine isopeptide (Lys-Gly) (interchain with G-Cter in SUMO)). Positions 89 and 93 each coordinate S-adenosyl-L-methionine. The segment covering 139-151 has biased composition (polar residues); that stretch reads RTQGTETHCQESF. The interval 139–180 is disordered; the sequence is RTQGTETHCQESFVSPEPGSRGRSAPDPDLEEYSKGPGKTEP. The S-adenosyl-L-methionine site is built by glycine 194, aspartate 220, and aspartate 246.

It belongs to the methyltransferase superfamily. METL family. Interacts with EP300. In terms of tissue distribution, absent in embryonic lung but is induced in a fibroblast cell line by stretch. As to expression, expressed in undifferentiated progenitor cells, while its expression is inhibited by stretch. Absent in undifferentiated embryonic lung mesenchymal cells, but expression is induced by stretch. In terms of tissue distribution, expressed in mature adipose tissue.

Its subcellular location is the mitochondrion. The protein localises to the cytoplasm. It is found in the nucleus. It catalyses the reaction cytidine(32) in tRNA(Ser) + S-adenosyl-L-methionine = N(3)-methylcytidine(32) in tRNA(Ser) + S-adenosyl-L-homocysteine + H(+). The catalysed reaction is cytidine(32) in tRNA(Thr) + S-adenosyl-L-methionine = N(3)-methylcytidine(32) in tRNA(Thr) + S-adenosyl-L-homocysteine + H(+). It carries out the reaction a cytidine in mRNA + S-adenosyl-L-methionine = an N(3)-methylcytidine in mRNA + S-adenosyl-L-homocysteine + H(+). In terms of biological role, mitochondrial S-adenosyl-L-methionine-dependent methyltransferase that mediates N(3)-methylcytidine modification of residue 32 of the tRNA anticodon loop of mitochondrial tRNA(Ser)(UCN) and tRNA(Thr). N(3)-methylcytidine methylation modification regulates mitochondrial translation efficiency and is required for activity of the respiratory chain. N(3)-methylcytidine methylation of mitochondrial tRNA(Ser)(UCN) requires the formation of N(6)-dimethylallyladenosine(37) (i6A37) by TRIT1 as prerequisite. May also mediate N(3)-methylcytidine modification of mRNAs. The existence of N(3)-methylcytidine modification on mRNAs is however unclear, and additional evidences are required to confirm the role of the N(3)-methylcytidine-specific mRNA methyltransferase activity of METTL8 in vivo. Overexpression in lung progenitor cells stimulates smooth muscle-specific gene expression and suppresses adipogenic gene expression. Functionally, stimulates adipogenesis. In Mus musculus (Mouse), this protein is tRNA N(3)-cytidine methyltransferase METTL8, mitochondrial.